Here is a 283-residue protein sequence, read N- to C-terminus: uncharacterized protein (283 aa).

This is an uncharacterized protein from Acanthamoeba polyphaga mimivirus (APMV).